A 430-amino-acid polypeptide reads, in one-letter code: Retinoic acid receptor RXR-alpha-A (430 aa).

Positions 1-20 (MHPSLLSPTSLGPSGSLHSP) are enriched in low complexity. Disordered regions lie at residues 1-25 (MHPS…STLS) and 48-73 (ASPG…SSSE). Residues 1–99 (MHPSLLSPTS…QPSGTPLSLT (99 aa)) form a modulating region. Over residues 58 to 72 (ISPQLNSHMNSVSSS) the composition is skewed to polar residues. A DNA-binding region (nuclear receptor) is located at residues 100-175 (KHICAICGDR…MGMKREAVQE (76 aa)). Zn(2+)-binding residues include Cys-103, Cys-106, Cys-120, and Cys-123. An NR C4-type zinc finger spans residues 103 to 123 (CAICGDRSSGKHYGVYSCEGC). Positions 128-133 (KRTVRK) are nuclear localization signal. Residues Cys-139, Cys-145, Cys-155, and Cys-158 each coordinate Zn(2+). The NR C4-type zinc-finger motif lies at 139–158 (CRDNKDCVIDKRQRNRCQYC). Basic and acidic residues predominate over residues 174–186 (QEERQRAKERSEN). Positions 174 to 196 (QEERQRAKERSENEVESTSSANE) are disordered. A hinge region spans residues 176–192 (ERQRAKERSENEVESTS). Residues 195–426 (NEDMPVEKIL…TFLMEMLEAP (232 aa)) form the NR LBD domain. Positions 284 and 295 each coordinate 9-cis-retinoate. The all-trans-retinoate site is built by Arg-284 and Ala-295. Residues 316 to 336 (RVLTELVSKMRDMQMDKTELG) form a required for nuclear export region. The tract at residues 415 to 426 (IDTFLMEMLEAP) is AF-2.

Belongs to the nuclear hormone receptor family. NR2 subfamily. In terms of assembly, homodimer. Heterodimer; with a rar molecule. Binds DNA preferentially as a rar/rxr heterodimer.

The protein localises to the nucleus. Functionally, receptor for retinoic acid that acts as a transcription factor. Forms homo- or heterodimers with retinoic acid receptors (rars) and binds to target response elements in response to their ligands, all-trans or 9-cis retinoic acid, to regulate gene expression in various biological processes. The rar/rxr heterodimers bind to the retinoic acid response elements (RARE) composed of tandem 5'-AGGTCA-3' sites known as DR1-DR5 to regulate transcription. The high affinity ligand for rxrs is 9-cis retinoic acid. In the absence of ligand, the rar/rxr heterodimers associate with a multiprotein complex containing transcription corepressors that induce histone deacetylation, chromatin condensation and transcriptional suppression. On ligand binding, the corepressors dissociate from the receptors and coactivators are recruited leading to transcriptional activation. The sequence is that of Retinoic acid receptor RXR-alpha-A from Danio rerio (Zebrafish).